The sequence spans 256 residues: Follistatin-related protein 3 (256 aa).

A signal peptide spans 1–23 (MRSGALWPLLWGALVWTVGSVGA). Residues 34–105 (GVCWLQQGRE…SCDGVECGPG (72 aa)) enclose the TB domain. 8 disulfide bridges follow: Cys-36-Cys-59, Cys-46-Cys-90, Cys-60-Cys-93, Cys-97-Cys-108, Cys-102-Cys-117, Cys-119-Cys-151, Cys-123-Cys-144, and Cys-133-Cys-165. Asn-71 carries N-linked (GlcNAc...) asparagine glycosylation. One can recognise a Follistatin-like 1 domain in the interval 97–117 (CDGVECGPGKACRMLGGRPHC). 2 consecutive Kazal-like domains span residues 111–167 (LGGR…RCQK) and 187–243 (SAHC…ICTG). The 24-residue stretch at 168–191 (SCAQVVCPRPQSCLVDQTGSAHCV) folds into the Follistatin-like 2 domain. Intrachain disulfides connect Cys-193-Cys-227, Cys-198-Cys-220, and Cys-209-Cys-241. Asn-213 carries N-linked (GlcNAc...) asparagine glycosylation.

As to quaternary structure, interacts with INHBA and INHBB. Interacts with FN1. Interacts with ADAM12. Interacts with MLLT10; the interaction enhances MLLT10 in vitro transcriptional activity and self-association. Interacts with MSTN. As to expression, abundantly expressed in heart, lung, kidney and testis. Continuously expressed in embryonic heart.

The protein resides in the secreted. It localises to the nucleus. Functionally, the secreted form is a binding and antagonizing protein for members of the TGF-beta family, such as activin, BMP2 and MSTN. Inhibits activin A-, activin B-, BMP2- and MSDT-induced cellular signaling; more effective on activin A than on activin B. Involved in bone formation; inhibits osteoclast differentiation. Involved in hematopoiesis; involved in differentiation of hemopoietic progenitor cells, increases hematopoietic cell adhesion to fibronectin and seems to contribute to the adhesion of hematopoietic precursor cells to the bone marrow stroma. The nuclear form is probably involved in transcriptional regulation via interaction with MLLT10. This Mus musculus (Mouse) protein is Follistatin-related protein 3 (Fstl3).